Reading from the N-terminus, the 100-residue chain is MDLAFELRKAIETGKVVIGSNETMRLARTGEAKLIIMAKNAPKEVKDDINYYAGLSSIPVYEFEGTSVELGTLLGKPFVIALMAIVEPGESKILSLAGGK.

The protein belongs to the eukaryotic ribosomal protein eL30 family.

The sequence is that of Large ribosomal subunit protein eL30 from Thermococcus sibiricus (strain DSM 12597 / MM 739).